The sequence spans 687 residues: Calcium-binding protein SP84 (687 aa).

A signal peptide spans 1–19; sequence MMRAIYLLVVVCWAAAANA. 5 consecutive EF-hand domains span residues 152 to 187, 257 to 292, 406 to 441, 476 to 511, and 579 to 614; these read LESD…HKNK, LTEI…TDDV, KTEA…PHMV, IENA…NNDA, and MTER…VKDL. Ca(2+) contacts are provided by D592, N594, D596, E598, and D603.

Expressed in salivary glands where expression is strongest in type III cells in the posterior lobe of the principal glands (at protein level). Not expressed in midgut, Malpighian tubules or epidermis.

It is found in the secreted. Its function is as follows. Binds calcium. During feeding of the phloem sap, protein is injected into sieve tubes of rice plants. This process may suppress the sieve-element clogging and facilitate continuous ingestion from sieve tubes. The sequence is that of Calcium-binding protein SP84 from Nephotettix cincticeps (Green rice leafhopper).